A 186-amino-acid polypeptide reads, in one-letter code: Ribosome-recycling factor (186 aa).

The protein belongs to the RRF family.

Its subcellular location is the cytoplasm. Its function is as follows. Responsible for the release of ribosomes from messenger RNA at the termination of protein biosynthesis. May increase the efficiency of translation by recycling ribosomes from one round of translation to another. This Nitratidesulfovibrio vulgaris (strain DP4) (Desulfovibrio vulgaris) protein is Ribosome-recycling factor.